The following is a 320-amino-acid chain: RNA polymerase sigma factor SigA2 (320 aa).

Residues 89–159 (MIEANLRLVV…TRAIAQQSRT (71 aa)) form a sigma-70 factor domain-2 region. The Interaction with polymerase core subunit RpoC signature appears at 113 to 116 (DLIQ). Positions 168–243 (EKLNKLKKTQ…EDEQSSPSDY (76 aa)) are sigma-70 factor domain-3. The sigma-70 factor domain-4 stretch occupies residues 256–310 (LMAELTPQQQAVIALRYGLDEGDSLSLAKVGERLNISRERVRKLERQAMDHLRRR). The H-T-H motif DNA-binding region spans 282–301 (LAKVGERLNISRERVRKLER).

This sequence belongs to the sigma-70 factor family.

The protein resides in the cytoplasm. Sigma factors are initiation factors that promote the attachment of RNA polymerase to specific initiation sites and are then released. This sigma factor is a component of the biological clock pathway that affects the circadian expression of a subset of genes in this bacterium. The sequence is that of RNA polymerase sigma factor SigA2 (sigA2) from Synechococcus elongatus (strain ATCC 33912 / PCC 7942 / FACHB-805) (Anacystis nidulans R2).